Here is a 500-residue protein sequence, read N- to C-terminus: NF-kappa-B inhibitor cactus (500 aa).

Positions 1 to 43 are enriched in low complexity; the sequence is MPSPTKAAEAATKATATSDCSCSAASVEQRAPSNAANPSSSLA. Disordered stretches follow at residues 1–148 and 171–212; these read MPSP…MRLK and LNNL…APPS. The residue at position 45 (serine 45) is a Phosphoserine; by PKC. A compositionally biased stretch (polar residues) spans 69-86; it reads NETSDSGFISGPQSSQIF. Positions 118 to 130 are enriched in acidic residues; that stretch reads IIDEEEDQEEQEK. Phosphoserine; by PKC is present on serine 144. Positions 171–189 are enriched in polar residues; it reads LNNLGQSSSTQITGRSKVQ. Threonine 183 is subject to Phosphothreonine; by PKC. The segment covering 190–212 has biased composition (low complexity); that stretch reads SSTASTANANPSGSGATSSAPPS. ANK repeat units lie at residues 229–261, 265–294, 298–327, 361–390, and 395–424; these read DGDT…LLNI, VAQT…EPTV, HGNT…ATEI, DGER…DINA, and SGRT…KLNL. Threonine 293 and threonine 319 each carry phosphothreonine; by PKC. Residue serine 395 is modified to Phosphoserine; by PKC.

The protein belongs to the NF-kappa-B inhibitor family. Phosphorylated isoform A binds to dorsal (dl); inhibits dl translocation to the nucleus and therefore from binding to DNA. In vitro, interacts with IKKbeta. Interacts with cactin and kappa-B-Ras. In terms of processing, activated IKKbeta phosphorylates cact. In terms of tissue distribution, expressed in ovary (at protein level).

It localises to the cytoplasm. Involved in the formation of the dorsoventral pattern. It inhibits nuclear translocation of the dorsal morphogen in the dorsal region of the embryo. Acts as a negative regulator of the NF-kappa-B (rel) signaling pathway. Cact is degraded by IKKbeta, this is essential for NF-kappa-B (rel) activation. This is NF-kappa-B inhibitor cactus (cact) from Drosophila melanogaster (Fruit fly).